We begin with the raw amino-acid sequence, 133 residues long: p53 and DNA damage-regulated protein 1 (133 aa).

The protein belongs to the prefoldin subunit beta family. Component of the PAQosome complex which is responsible for the biogenesis of several protein complexes and which consists of R2TP complex members RUVBL1, RUVBL2, RPAP3 and PIH1D1, URI complex members PFDN2, PFDN6, PDRG1, UXT and URI1 as well as ASDURF, POLR2E and DNAAF10/WDR92.

The protein resides in the cytoplasm. In terms of biological role, may play a role in chaperone-mediated protein folding. The sequence is that of p53 and DNA damage-regulated protein 1 (Pdrg1) from Rattus norvegicus (Rat).